The following is a 227-amino-acid chain: Cytochrome c oxidase subunit 2 (227 aa).

The Mitochondrial intermembrane portion of the chain corresponds to 1 to 14 (MAYPFQLGLQDATS). A helical transmembrane segment spans residues 15–45 (PIMEELTNFHDHTLMIVFLISSLVLYIISLM). At 46–59 (LTTKLTHTSTMDAQ) the chain is on the mitochondrial matrix side. Residues 60 to 87 (EVETIWTILPAAILVLIALPSLRILYMM) form a helical membrane-spanning segment. At 88–227 (DEINNPALTV…YFENWSASMI (140 aa)) the chain is on the mitochondrial intermembrane side. His161, Cys196, Glu198, Cys200, His204, and Met207 together coordinate Cu cation. A Mg(2+)-binding site is contributed by Glu198. Tyr218 carries the phosphotyrosine modification.

Belongs to the cytochrome c oxidase subunit 2 family. In terms of assembly, component of the cytochrome c oxidase (complex IV, CIV), a multisubunit enzyme composed of 14 subunits. The complex is composed of a catalytic core of 3 subunits MT-CO1, MT-CO2 and MT-CO3, encoded in the mitochondrial DNA, and 11 supernumerary subunits COX4I, COX5A, COX5B, COX6A, COX6B, COX6C, COX7A, COX7B, COX7C, COX8 and NDUFA4, which are encoded in the nuclear genome. The complex exists as a monomer or a dimer and forms supercomplexes (SCs) in the inner mitochondrial membrane with NADH-ubiquinone oxidoreductase (complex I, CI) and ubiquinol-cytochrome c oxidoreductase (cytochrome b-c1 complex, complex III, CIII), resulting in different assemblies (supercomplex SCI(1)III(2)IV(1) and megacomplex MCI(2)III(2)IV(2)). Found in a complex with TMEM177, COA6, COX18, COX20, SCO1 and SCO2. Interacts with TMEM177 in a COX20-dependent manner. Interacts with COX20. Interacts with COX16. The cofactor is Cu cation.

The protein localises to the mitochondrion inner membrane. The catalysed reaction is 4 Fe(II)-[cytochrome c] + O2 + 8 H(+)(in) = 4 Fe(III)-[cytochrome c] + 2 H2O + 4 H(+)(out). Component of the cytochrome c oxidase, the last enzyme in the mitochondrial electron transport chain which drives oxidative phosphorylation. The respiratory chain contains 3 multisubunit complexes succinate dehydrogenase (complex II, CII), ubiquinol-cytochrome c oxidoreductase (cytochrome b-c1 complex, complex III, CIII) and cytochrome c oxidase (complex IV, CIV), that cooperate to transfer electrons derived from NADH and succinate to molecular oxygen, creating an electrochemical gradient over the inner membrane that drives transmembrane transport and the ATP synthase. Cytochrome c oxidase is the component of the respiratory chain that catalyzes the reduction of oxygen to water. Electrons originating from reduced cytochrome c in the intermembrane space (IMS) are transferred via the dinuclear copper A center (CU(A)) of subunit 2 and heme A of subunit 1 to the active site in subunit 1, a binuclear center (BNC) formed by heme A3 and copper B (CU(B)). The BNC reduces molecular oxygen to 2 water molecules using 4 electrons from cytochrome c in the IMS and 4 protons from the mitochondrial matrix. The sequence is that of Cytochrome c oxidase subunit 2 (MT-CO2) from Rhabdomys pumilio (Four-striped grass mouse).